Reading from the N-terminus, the 1700-residue chain is Probable serine/threonine-protein kinase ifkC (1700 aa).

Residues M1 to A25 are disordered. Pro residues predominate over residues Q14–A23. In terms of domain architecture, RWD spans M74 to N197. Positions G454–E463 are enriched in polar residues. The segment at G454 to S488 is disordered. The span at G466 to S477 shows a compositional bias: gly residues. A compositionally biased stretch (polar residues) spans Q479–S488. Residues F494–M1027 form the Protein kinase domain. ATP-binding positions include L500–V508 and K523. Disordered regions lie at residues L568 to D639 and G689 to K760. Over residues N572 to D639 the composition is skewed to acidic residues. Low complexity predominate over residues S697–K735. Over residues S736–S752 the composition is skewed to basic residues. Catalysis depends on D822, which acts as the Proton acceptor. Low complexity-rich tracts occupy residues T850–S875, N1135–S1158, S1230–S1240, and N1509–N1531. Disordered stretches follow at residues T850–G901, F1134–V1160, K1216–T1253, and N1507–N1531.

It belongs to the protein kinase superfamily. Ser/Thr protein kinase family. GCN2 subfamily.

The catalysed reaction is L-seryl-[protein] + ATP = O-phospho-L-seryl-[protein] + ADP + H(+). It catalyses the reaction L-threonyl-[protein] + ATP = O-phospho-L-threonyl-[protein] + ADP + H(+). This chain is Probable serine/threonine-protein kinase ifkC (ifkC), found in Dictyostelium discoideum (Social amoeba).